Reading from the N-terminus, the 496-residue chain is Alanine aminotransferase 1 (496 aa).

Residue Ala2 is modified to N-acetylalanine. Thr22 carries the post-translational modification Phosphothreonine. Lys314 carries the post-translational modification N6-(pyridoxal phosphate)lysine.

Belongs to the class-I pyridoxal-phosphate-dependent aminotransferase family. Alanine aminotransferase subfamily. Homodimer. Pyridoxal 5'-phosphate is required as a cofactor.

The protein localises to the cytoplasm. It carries out the reaction L-alanine + 2-oxoglutarate = pyruvate + L-glutamate. It functions in the pathway amino-acid degradation; L-alanine degradation via transaminase pathway; pyruvate from L-alanine: step 1/1. In terms of biological role, catalyzes the reversible transamination between alanine and 2-oxoglutarate to form pyruvate and glutamate. Participates in cellular nitrogen metabolism and also in liver gluconeogenesis starting with precursors transported from skeletal muscles. The chain is Alanine aminotransferase 1 (GPT) from Bos taurus (Bovine).